The following is a 256-amino-acid chain: Thiazole synthase (256 aa).

The active-site Schiff-base intermediate with DXP is the K96. Residues G157, 184 to 185 (AG), and 206 to 207 (NT) each bind 1-deoxy-D-xylulose 5-phosphate.

This sequence belongs to the ThiG family. As to quaternary structure, homotetramer. Forms heterodimers with either ThiH or ThiS.

It localises to the cytoplasm. It carries out the reaction [ThiS sulfur-carrier protein]-C-terminal-Gly-aminoethanethioate + 2-iminoacetate + 1-deoxy-D-xylulose 5-phosphate = [ThiS sulfur-carrier protein]-C-terminal Gly-Gly + 2-[(2R,5Z)-2-carboxy-4-methylthiazol-5(2H)-ylidene]ethyl phosphate + 2 H2O + H(+). Its pathway is cofactor biosynthesis; thiamine diphosphate biosynthesis. Its function is as follows. Catalyzes the rearrangement of 1-deoxy-D-xylulose 5-phosphate (DXP) to produce the thiazole phosphate moiety of thiamine. Sulfur is provided by the thiocarboxylate moiety of the carrier protein ThiS. In vitro, sulfur can be provided by H(2)S. The sequence is that of Thiazole synthase from Brucella abortus (strain S19).